The following is a 129-amino-acid chain: uncharacterized protein (129 aa).

The protein to M.pneumoniae MPN_376 N-terminal region.

This is an uncharacterized protein from Mycoplasma pneumoniae (strain ATCC 29342 / M129 / Subtype 1) (Mycoplasmoides pneumoniae).